Consider the following 307-residue polypeptide: Taste receptor type 2 member 10 (307 aa).

The Extracellular portion of the chain corresponds to methionine 1–glutamate 6. A helical transmembrane segment spans residues glycine 7–isoleucine 27. The Cytoplasmic segment spans residues glycine 28–threonine 42. The helical transmembrane segment at isoleucine 43–threonine 63 threads the bilayer. Residues aspartate 64–threonine 100 are Extracellular-facing. The helical transmembrane segment at serine 101–leucine 121 threads the bilayer. The Cytoplasmic segment spans residues lysine 122 to asparagine 126. The helical transmembrane segment at methionine 127–isoleucine 147 threads the bilayer. The Extracellular portion of the chain corresponds to alanine 148 to asparagine 179. Asparagine 158 carries N-linked (GlcNAc...) asparagine glycosylation. A helical membrane pass occupies residues leucine 180 to leucine 200. The Cytoplasmic segment spans residues tryptophan 201–lysine 227. The helical transmembrane segment at valine 228 to serine 248 threads the bilayer. Residues tyrosine 249–leucine 257 are Extracellular-facing. Residues leucine 258–isoleucine 278 form a helical membrane-spanning segment. The Cytoplasmic segment spans residues leucine 279–threonine 307.

This sequence belongs to the G-protein coupled receptor T2R family.

It localises to the membrane. Its function is as follows. Receptor that may play a role in the perception of bitterness and is gustducin-linked. May play a role in sensing the chemical composition of the gastrointestinal content. The activity of this receptor may stimulate alpha gustducin, mediate PLC-beta-2 activation and lead to the gating of TRPM5. The polypeptide is Taste receptor type 2 member 10 (TAS2R10) (Pan paniscus (Pygmy chimpanzee)).